The primary structure comprises 328 residues: D-cysteine desulfhydrase (328 aa).

K51 is subject to N6-(pyridoxal phosphate)lysine.

The protein belongs to the ACC deaminase/D-cysteine desulfhydrase family. As to quaternary structure, homodimer. Pyridoxal 5'-phosphate serves as cofactor.

It carries out the reaction D-cysteine + H2O = hydrogen sulfide + pyruvate + NH4(+) + H(+). In terms of biological role, catalyzes the alpha,beta-elimination reaction of D-cysteine and of several D-cysteine derivatives. It could be a defense mechanism against D-cysteine. This chain is D-cysteine desulfhydrase, found in Shigella boydii serotype 18 (strain CDC 3083-94 / BS512).